We begin with the raw amino-acid sequence, 96 residues long: Large ribosomal subunit protein uL23 (96 aa).

Belongs to the universal ribosomal protein uL23 family. In terms of assembly, part of the 50S ribosomal subunit. Contacts protein L29, and trigger factor when it is bound to the ribosome.

Its function is as follows. One of the early assembly proteins it binds 23S rRNA. One of the proteins that surrounds the polypeptide exit tunnel on the outside of the ribosome. Forms the main docking site for trigger factor binding to the ribosome. The polypeptide is Large ribosomal subunit protein uL23 (Alkaliphilus metalliredigens (strain QYMF)).